Reading from the N-terminus, the 171-residue chain is Large ribosomal subunit protein bL9 (171 aa).

The protein belongs to the bacterial ribosomal protein bL9 family.

Binds to the 23S rRNA. This chain is Large ribosomal subunit protein bL9, found in Rickettsia africae (strain ESF-5).